The chain runs to 364 residues: DNA polymerase IV (364 aa).

The UmuC domain occupies 14 to 198 (IIHIDMDAFF…LPIEKFHGVG (185 aa)). The Mg(2+) site is built by D18 and D116. E117 is a catalytic residue.

The protein belongs to the DNA polymerase type-Y family. As to quaternary structure, monomer. Mg(2+) serves as cofactor.

The protein resides in the cytoplasm. It carries out the reaction DNA(n) + a 2'-deoxyribonucleoside 5'-triphosphate = DNA(n+1) + diphosphate. Functionally, poorly processive, error-prone DNA polymerase involved in untargeted mutagenesis. Copies undamaged DNA at stalled replication forks, which arise in vivo from mismatched or misaligned primer ends. These misaligned primers can be extended by PolIV. Exhibits no 3'-5' exonuclease (proofreading) activity. May be involved in translesional synthesis, in conjunction with the beta clamp from PolIII. This chain is DNA polymerase IV, found in Streptococcus pyogenes serotype M6 (strain ATCC BAA-946 / MGAS10394).